The primary structure comprises 267 residues: MKKILLTNDDGYHAKGIKALEQALEEMAEIYVVAPKHEKSACSQCITITAPLRAEKIKGKEGRHYRIDDGTPSDCVYLAINELFKHVCFDLVISGINLGSNMGEDTIYSGTVAGAIEGTIQGVPSIAISQILSNKNKNTPLSFDLAQKIIQDLVQNIFKNGYPLKGRKLLNVNVPNCSLQEYKGERITPKGYRLYKKEVHKRTDPKNESYFWLGLHPLEWQKRENEDRLSDFDAIASNHASITPLNLDLTSYDDLKSLESWHEGMLK.

A divalent metal cation is bound by residues Asp-9, Asp-10, Ser-40, and Asn-97.

This sequence belongs to the SurE nucleotidase family. Requires a divalent metal cation as cofactor.

The protein resides in the cytoplasm. It catalyses the reaction a ribonucleoside 5'-phosphate + H2O = a ribonucleoside + phosphate. In terms of biological role, nucleotidase that shows phosphatase activity on nucleoside 5'-monophosphates. The polypeptide is 5'-nucleotidase SurE (Helicobacter pylori (strain G27)).